A 416-amino-acid chain; its full sequence is Phosphoglycerate kinase (416 aa).

(2R)-3-phosphoglycerate is bound by residues Val22, Asp23, Phe24, Asn25, Gln37, Arg38, Ser61, His62, Gly64, Arg65, Leu120, Arg121, His168, and Arg169. Gly212 contacts ADP. A CDP-binding site is contributed by Gly212. AMP contacts are provided by Ala213 and Lys214. An ATP-binding site is contributed by Ala213. Ala213 lines the Mg(2+) pocket. Position 217 (Asp217) interacts with CDP. Residue Asp217 participates in Mg(2+) binding. An AMP-binding site is contributed by Lys218. Lys218 lines the ATP pocket. Gly236 is a binding site for ADP. Residue Gly236 participates in CDP binding. Residues Gly237 and Gly311 each contribute to the AMP site. Gly237 and Gly311 together coordinate ATP. CDP contacts are provided by Gly336 and Phe341. Phe341 is an ADP binding site. Residue Glu342 participates in AMP binding. ATP contacts are provided by Glu342, Asp373, and Thr374. Asp373 lines the Mg(2+) pocket.

Belongs to the phosphoglycerate kinase family. Monomer. Mg(2+) serves as cofactor. As to expression, expressed in all cells of the worm (at protein level), higher expression in the cells associated with the tubercles (tegumental modifications), the muscle and along the tegument.

The enzyme catalyses (2R)-3-phosphoglycerate + ATP = (2R)-3-phospho-glyceroyl phosphate + ADP. Its pathway is carbohydrate degradation; glycolysis; pyruvate from D-glyceraldehyde 3-phosphate: step 2/5. Functionally, involved in the seventh step in glycolysis. Catalyzes the conversion of 1,3-bisphosphoglycerate ((2R)-3-phospho-glyceroyl phosphate) to 3-phosphoglycerate ((2R)-3-phosphoglycerate) and results in the formation of ATP. Associated with the tegument to provide the energy needed for the tegumental repair resulting from immune damage. The polypeptide is Phosphoglycerate kinase (PGK) (Schistosoma mansoni (Blood fluke)).